The primary structure comprises 275 residues: Glutamate racemase (275 aa).

Substrate-binding positions include 22–23 (DS) and 54–55 (YG). The active-site Proton donor/acceptor is cysteine 85. 86–87 (NT) lines the substrate pocket. Residue cysteine 196 is the Proton donor/acceptor of the active site. 197-198 (TH) provides a ligand contact to substrate.

Belongs to the aspartate/glutamate racemases family.

The catalysed reaction is L-glutamate = D-glutamate. It functions in the pathway cell wall biogenesis; peptidoglycan biosynthesis. In terms of biological role, provides the (R)-glutamate required for cell wall biosynthesis. In Pseudomonas syringae pv. tomato (strain ATCC BAA-871 / DC3000), this protein is Glutamate racemase.